The following is a 100-amino-acid chain: Small ribosomal subunit protein uS14c (100 aa).

Belongs to the universal ribosomal protein uS14 family. As to quaternary structure, part of the 30S ribosomal subunit.

The protein localises to the plastid. Its subcellular location is the chloroplast. Functionally, binds 16S rRNA, required for the assembly of 30S particles. The chain is Small ribosomal subunit protein uS14c from Porphyra purpurea (Red seaweed).